The primary structure comprises 155 residues: FHA domain-containing protein FhaB (155 aa).

A helical transmembrane segment spans residues 6-28 (LQLTRAGFLMLLWVFIWSVLRIL). Residue threonine 36 is modified to Phosphothreonine. The region spanning 83–132 (VLIGRADDSTLVLTDDYASTRHARLSMRGSEWYVEDLGSTNGTYLDRAKV) is the FHA domain.

In terms of processing, phosphorylated by PknB. Dephosphorylated by PstP.

The protein resides in the cell membrane. This Mycobacterium tuberculosis (strain CDC 1551 / Oshkosh) protein is FHA domain-containing protein FhaB (fhaB).